The primary structure comprises 480 residues: Amino acid permease 5 (480 aa).

The segment at 1–25 (MVVQNVQDLDVLPKHSSDSFDDDGR) is disordered. The Cytoplasmic portion of the chain corresponds to 1–31 (MVVQNVQDLDVLPKHSSDSFDDDGRPKRTGT). Positions 11–25 (VLPKHSSDSFDDDGR) are enriched in basic and acidic residues. 2 helical membrane-spanning segments follow: residues 32 to 52 (VWTA…LSLA) and 53 to 73 (WAVA…FSFV). The Cytoplasmic segment spans residues 74–120 (TFYTSTLLCSCYRSGDSVTGKRNYTYMDAIHSNLGGIKVKVCGVVQY). Residues 121-141 (VNLFGTAIGYTIASAISLVAI) form a helical membrane-spanning segment. Residues 142-157 (QRTSCQQMNGPNDPCH) lie on the Extracellular side of the membrane. The helical transmembrane segment at 158-178 (VNGNVYMIAFGIVQIIFSQIP) threads the bilayer. The Cytoplasmic segment spans residues 179 to 182 (DFDQ). The chain crosses the membrane as a helical span at residues 183–203 (LWWLSIVAAVMSFAYSAIGLG). At 204 to 241 (LGVSKVVENKEIKGSLTGVTVGTVTLSGTVTSSQKIWR) the chain is on the extracellular side. The chain crosses the membrane as a helical span at residues 242–262 (TFQSLGNIAFAYSYSMILIEI). The Cytoplasmic portion of the chain corresponds to 263–280 (QDTVKSPPAEVNTMRKAT). Residues 281–301 (FVSVAVTTVFYMLCGCVGYAA) traverse the membrane as a helical segment. Topologically, residues 302-328 (FGDNAPGNLLAHGGFRNPYWLLDIANL) are extracellular. Residues 329–349 (AIVIHLVGAYQVYCQPLFAFV) form a helical membrane-spanning segment. The Cytoplasmic portion of the chain corresponds to 350-383 (EKEASRRFPESEFVTKEIKIQLFPGKPFNLNLFR). Residues 384–404 (LVWRTFFVMTTTLISMLMPFF) form a helical membrane-spanning segment. Topologically, residues 405–406 (ND) are extracellular. The helical transmembrane segment at 407-427 (VVGLLGAIGFWPLTVYFPVEM) threads the bilayer. The Cytoplasmic segment spans residues 428-445 (YIAQKNVPRWGTKWVCLQ). The helical transmembrane segment at 446–466 (VLSVTCLFVSVAAAAGSVIGI) threads the bilayer. Residues 467–480 (VSDLKVYKPFQSEF) are Extracellular-facing.

The protein belongs to the amino acid/polyamine transporter 2 family. Amino acid/auxin permease (AAAP) (TC 2.A.18.2) subfamily. Expressed in leaves, stems, roots, siliques and flowers.

The protein localises to the cell membrane. With respect to regulation, inhibited by 2,4-dinitrophenol. Its function is as follows. Amino acid-proton symporter. Stereospecific transporter with a broad specificity for glutamate and both neutral and basic amino acids. Reduced affinities for asparagine and valine. High affinity transport of the cationic amino acids arginine and lysine, but not of histidine. The protein is Amino acid permease 5 (AAP5) of Arabidopsis thaliana (Mouse-ear cress).